Reading from the N-terminus, the 274-residue chain is Type III pantothenate kinase (274 aa).

Asp-6–Val-13 provides a ligand contact to ATP. Residues Tyr-110 and Gly-117–Arg-120 contribute to the substrate site. Asp-119 acts as the Proton acceptor in catalysis. Asp-139 lines the K(+) pocket. Thr-142 is a binding site for ATP. Thr-194 provides a ligand contact to substrate.

Belongs to the type III pantothenate kinase family. Homodimer. NH4(+) is required as a cofactor. Requires K(+) as cofactor.

The protein localises to the cytoplasm. It carries out the reaction (R)-pantothenate + ATP = (R)-4'-phosphopantothenate + ADP + H(+). The protein operates within cofactor biosynthesis; coenzyme A biosynthesis; CoA from (R)-pantothenate: step 1/5. Catalyzes the phosphorylation of pantothenate (Pan), the first step in CoA biosynthesis. In Koribacter versatilis (strain Ellin345), this protein is Type III pantothenate kinase.